The chain runs to 382 residues: Serine protease 43 (382 aa).

The first 27 residues, 1-27, serve as a signal peptide directing secretion; it reads MGGFCGADRGGFLALLVWLQLLQPLFS. Residues 30 to 97 are disordered; the sequence is YKPREDSGVM…SGTTTKITLE (68 aa). Composition is skewed to polar residues over residues 56–68 and 85–95; these read AQQS…SISH and GSPSGTTTKIT. A Peptidase S1 domain is found at 119-355; it reads VDPGSLSAGR…YNEWVSYVLS (237 aa). Cysteines 144 and 160 form a disulfide. Catalysis depends on charge relay system residues H159 and D205. 3 cysteine pairs are disulfide-bonded: C239/C313, C272/C293, and C303/C331. Residue S307 is the Charge relay system of the active site. A helical membrane pass occupies residues 362–382; sequence PMGVLVLYLSLVFPLALLVAL.

The protein belongs to the peptidase S1 family. Testis-specific. Expressed in germ cells at the stages from late pachytene spermatocytes to spermatids.

Its subcellular location is the cell membrane. Plays a role in spermatogenesis. Involved in germ cell survival during meiosis. Lacks protease activity in vitro. This Mus musculus (Mouse) protein is Serine protease 43.